A 239-amino-acid chain; its full sequence is Lectin (239 aa).

Residues asparagine 17 and asparagine 113 are each glycosylated (N-linked (GlcNAc...) asparagine).

Belongs to the leguminous lectin family. As to quaternary structure, homodimer.

In terms of biological role, galactose and N-acetyllactosamine specific lectin. In Erythrina crista-galli (Cockspur coral tree), this protein is Lectin.